Consider the following 299-residue polypeptide: Probable lipid kinase YegS (299 aa).

The 132-residue stretch at 2–133 (AEFPASLLIL…IDMAQVNKQT (132 aa)) folds into the DAGKc domain. Residues Thr40, 66–72 (GDGTINE), and Thr95 each bind ATP. 3 residues coordinate Mg(2+): Leu215, Asp218, and Leu220. Glu271 serves as the catalytic Proton acceptor.

This sequence belongs to the diacylglycerol/lipid kinase family. YegS lipid kinase subfamily. The cofactor is Mg(2+). Ca(2+) is required as a cofactor.

The protein resides in the cytoplasm. Its function is as follows. Probably phosphorylates lipids; the in vivo substrate is unknown. The polypeptide is Probable lipid kinase YegS (Escherichia coli (strain 55989 / EAEC)).